A 294-amino-acid chain; its full sequence is Deubiquitinase OTUD6B (294 aa).

Met-1 bears the N-acetylmethionine mark. Residues 148 to 285 (LEIKQIPSDG…GEHYNSVTRL (138 aa)) enclose the OTU domain. The interval 153-159 (IPSDGHC) is cys-loop. Asp-156 is a catalytic residue. The Nucleophile role is filled by Cys-159. Residues 220–230 (IVNTAAWGGQL) are variable-loop. The tract at residues 268–278 (YMRHAYGLGEH) is his-loop. His-278 is a catalytic residue.

As to quaternary structure, interacts with the eukaryotic translation initiation factor 4F complex. As to expression, ubiquitously expressed. Expression is observed in several organ systems including the cardiovascular, digestive, central and peripheral nervous and musculoskeletal systems.

The enzyme catalyses Thiol-dependent hydrolysis of ester, thioester, amide, peptide and isopeptide bonds formed by the C-terminal Gly of ubiquitin (a 76-residue protein attached to proteins as an intracellular targeting signal).. Functionally, deubiquitinating enzyme that may play a role in the ubiquitin-dependent regulation of protein synthesis, downstream of mTORC1. May associate with the protein synthesis initiation complex and modify its ubiquitination to repress translation. May also repress DNA synthesis and modify different cellular targets thereby regulating cell growth and proliferation. May also play a role in proteasome assembly and function. The chain is Deubiquitinase OTUD6B from Mus musculus (Mouse).